The sequence spans 100 residues: UPF0125 protein HD_1828 (100 aa).

Belongs to the UPF0125 (RnfH) family.

The polypeptide is UPF0125 protein HD_1828 (Haemophilus ducreyi (strain 35000HP / ATCC 700724)).